A 273-amino-acid polypeptide reads, in one-letter code: MSNISLTAAENLQQIRENKPLIHNITNFVVMNYTANVLLATGASPVMAHAQNEVEEMVAFAGSLVLNIGTLSESWVSSMLMASQRANTLKTPIILDPVGSGATAFRTASAKRIIAEAKVSVIRGNASEILSLGSEQSNTRGVDTSQSVSDAAQTASLLARELDTILAITGPTDLVTDGRRVFNVDNGHPLMPYVTGTGCSATAVVGAFAAVDRDYLRAATTALAFFGLAGEMAGKAATGPGSFMIHLLDALYNMSPEQLEKGCRIKESSATRS.

Residue Met47 participates in substrate binding. ATP contacts are provided by Arg123 and Thr169. Residue Gly196 participates in substrate binding.

It belongs to the Thz kinase family. Mg(2+) is required as a cofactor.

The enzyme catalyses 5-(2-hydroxyethyl)-4-methylthiazole + ATP = 4-methyl-5-(2-phosphooxyethyl)-thiazole + ADP + H(+). Its pathway is cofactor biosynthesis; thiamine diphosphate biosynthesis; 4-methyl-5-(2-phosphoethyl)-thiazole from 5-(2-hydroxyethyl)-4-methylthiazole: step 1/1. Catalyzes the phosphorylation of the hydroxyl group of 4-methyl-5-beta-hydroxyethylthiazole (THZ). The protein is Hydroxyethylthiazole kinase of Desulfotalea psychrophila (strain LSv54 / DSM 12343).